A 226-amino-acid polypeptide reads, in one-letter code: UPF0111 protein PH0637 (226 aa).

It belongs to the UPF0111 family.

The sequence is that of UPF0111 protein PH0637 from Pyrococcus horikoshii (strain ATCC 700860 / DSM 12428 / JCM 9974 / NBRC 100139 / OT-3).